Consider the following 386-residue polypeptide: Inactive GDSL esterase/lipase-like protein 23 (386 aa).

Residues 1-29 (MMAKNCNLVSVLCVFLVLTLFNKPITVAG) form the signal peptide. The active-site Nucleophile is the S43. N-linked (GlcNAc...) asparagine glycosylation is found at N105, N165, and N288. Catalysis depends on residues D322 and H325.

It belongs to the 'GDSL' lipolytic enzyme family. In terms of assembly, part of the PYK10 complex. Interacts with MVP1. In terms of tissue distribution, expressed mainly in roots.

It localises to the endoplasmic reticulum. Functionally, involved in the control of the PYK10 complex size and possibly substrate specificity. May be exported from the endoplasmic reticulum upon interaction with MVP1. The chain is Inactive GDSL esterase/lipase-like protein 23 (GLL23) from Arabidopsis thaliana (Mouse-ear cress).